The chain runs to 84 residues: uncharacterized protein (84 aa).

Residues Met1 to Ser21 are disordered. The helical transmembrane segment at Tyr49 to Lys69 threads the bilayer.

It is found in the membrane. This is an uncharacterized protein from Invertebrate iridescent virus 6 (IIV-6).